We begin with the raw amino-acid sequence, 466 residues long: MATYQTELDLFKNEVEQKQPNDFLQFAANYFTKRLEQQRTFVRNQESLALSKGIVLFPSTSKHDSVAASSASLSHGSSKANASQSGISSSGVDEDVLFKSPFVDRGPHSTHIVDHLDSTHSNTTASPAKASGGDAPGIFKGNFNVGTESQRKVNSSVDPMAPEPTATTHSFPRRSVVNPKPLPINFNAQRRTSVSGETLQPDHLDDWKPENFQEKSPEQVSRLEKAVGKNFLFNKLDSDSKKLVINSLEEKSIPQGKEIIKQGDEGDYFYIVEDGTVEFYVNNQKVNTSGPGSSFGELALMYNSPRAATVIASTDCILWALDRLTFRRILLGGSFKKRILYDDLLKNIPILKSLSTYDRAKLADALDTEYYEAGQTIIKEGDTGENFYFIEYGEADVSQEGKGVITKLGKGDYFGEVALLNDLPRQATVTATARTKVATLGKSGFQRLLGPVVDVLKLNDPTRSKH.

The interval 25 to 231 is dimerization and phosphorylation; the sequence is QFAANYFTKR…RLEKAVGKNF (207 aa). The segment covering 71 to 80 has biased composition (low complexity); it reads ASLSHGSSKA. Disordered regions lie at residues 71 to 90, 109 to 139, 154 to 179, and 193 to 218; these read ASLS…ISSS, STHI…PGIF, NSSV…VVNP, and SVSG…KSPE. The span at 81–90 shows a compositional bias: polar residues; it reads NASQSGISSS. Positions 109 to 118 are enriched in basic and acidic residues; the sequence is STHIVDHLDS. Position 193 is a phosphoserine (serine 193). The span at 200–218 shows a compositional bias: basic and acidic residues; that stretch reads QPDHLDDWKPENFQEKSPE. Residues 232 to 347, glutamate 297, arginine 306, 350 to 466, glutamate 416, and arginine 425 each bind 3',5'-cyclic AMP; these read LFNK…LLKN and ILKS…RSKH.

The protein belongs to the cAMP-dependent kinase regulatory chain family. As to quaternary structure, tetramer, composed of 2 regulatory (R) and 2 catalytic (C) subunits. In the presence of cAMP it dissociates into 2 active monomeric C subunits and an R dimer.

The sequence is that of cAMP-dependent protein kinase regulatory subunit (PKAR) from Kluyveromyces lactis (strain ATCC 8585 / CBS 2359 / DSM 70799 / NBRC 1267 / NRRL Y-1140 / WM37) (Yeast).